Consider the following 136-residue polypeptide: Protein PsiE (136 aa).

4 helical membrane passes run 15–35, 55–75, 83–103, and 108–128; these read ILQN…VVFL, YELV…ALIV, HFPL…LIIV, and PMDV…LWLC.

The protein belongs to the PsiE family.

The protein resides in the cell inner membrane. In Salmonella gallinarum (strain 287/91 / NCTC 13346), this protein is Protein PsiE.